Consider the following 244-residue polypeptide: U11/U12 small nuclear ribonucleoprotein 35 kDa protein (244 aa).

The RRM domain maps to leucine 51 to glutamate 129. Over residues glycine 146–phenylalanine 162 the composition is skewed to basic and acidic residues. Residues glycine 146–lysine 244 form a disordered region. Lysine 172 is covalently cross-linked (Glycyl lysine isopeptide (Lys-Gly) (interchain with G-Cter in SUMO2)). Basic and acidic residues-rich tracts occupy residues asparagine 173 to glutamate 185 and arginine 192 to lysine 244.

Component of the U11/U12 snRNPs that are part of the U12-type spliceosome.

The protein resides in the nucleus. The sequence is that of U11/U12 small nuclear ribonucleoprotein 35 kDa protein (Snrnp35) from Mus musculus (Mouse).